The following is a 561-amino-acid chain: Trehalose-6-phosphate hydrolase (561 aa).

The active-site Nucleophile is the Asp203. The Proton donor role is filled by Glu254.

It belongs to the glycosyl hydrolase 13 family.

Its subcellular location is the cytoplasm. It carries out the reaction alpha,alpha-trehalose 6-phosphate + H2O = D-glucose 6-phosphate + D-glucose. With respect to regulation, activity is stimulated by high salt concentrations with different efficiencies depending on the kind of salt. In vitro, inhibited by glucose. Functionally, hydrolyzes trehalose-6-phosphate to glucose and glucose 6-phosphate. Can also very effectively hydrolyze p-nitrophenyl-alpha-D-glucopyranoside, but not lactose, maltose, sucrose or sucrose-6-phosphate. Trehalose is also hydrolyzed, but to a much smaller extent than trehalose-6-phosphate. This chain is Trehalose-6-phosphate hydrolase, found in Bacillus subtilis (strain 168).